Consider the following 249-residue polypeptide: Carboxy-S-adenosyl-L-methionine synthase (249 aa).

Residues Y39, 64–66 (GCS), 117–118 (DI), N132, and R199 each bind S-adenosyl-L-methionine.

Belongs to the class I-like SAM-binding methyltransferase superfamily. Cx-SAM synthase family. In terms of assembly, homodimer.

The catalysed reaction is prephenate + S-adenosyl-L-methionine = carboxy-S-adenosyl-L-methionine + 3-phenylpyruvate + H2O. Its function is as follows. Catalyzes the conversion of S-adenosyl-L-methionine (SAM) to carboxy-S-adenosyl-L-methionine (Cx-SAM). This Aeromonas hydrophila subsp. hydrophila (strain ATCC 7966 / DSM 30187 / BCRC 13018 / CCUG 14551 / JCM 1027 / KCTC 2358 / NCIMB 9240 / NCTC 8049) protein is Carboxy-S-adenosyl-L-methionine synthase.